Here is a 291-residue protein sequence, read N- to C-terminus: MKIAVYGKGGIGKSTTSCNISVALARRGQKVLQIGCDPKHDSTFTLTGFLIPTIIDTLQSKDYHYEDIWPEDVIHKGYGGVDCVEAGGPPAGAGCGGYVVGETVKLLKELNAFYEYDIILFDVLGDVVCGGFAAPLNYADYCVIITDNGFDALFAANRITASIREKARTHPLRLAGLVGNRTSRRDLINKYVEACPMPVIEVLPIIEDIRVSRVKGKTLFEMVGFEPSLNYVCNYYLGIADQILSQPEGIVPKEIPDRELFSLLSDLYLNPIGGGGQKKKNQENLLGFTRI.

ATP-binding positions include 10–15 (GIGKST) and Lys39. A Mg(2+)-binding site is contributed by Ser14. Residues Cys95 and Cys129 each coordinate [4Fe-4S] cluster. ATP is bound at residue 180–181 (NR).

The protein belongs to the NifH/BchL/ChlL family. Homodimer. Protochlorophyllide reductase is composed of three subunits; ChlL, ChlN and ChlB. The cofactor is [4Fe-4S] cluster.

The protein localises to the plastid. Its subcellular location is the chloroplast. It carries out the reaction chlorophyllide a + oxidized 2[4Fe-4S]-[ferredoxin] + 2 ADP + 2 phosphate = protochlorophyllide a + reduced 2[4Fe-4S]-[ferredoxin] + 2 ATP + 2 H2O. It functions in the pathway porphyrin-containing compound metabolism; chlorophyll biosynthesis (light-independent). In terms of biological role, component of the dark-operative protochlorophyllide reductase (DPOR) that uses Mg-ATP and reduced ferredoxin to reduce ring D of protochlorophyllide (Pchlide) to form chlorophyllide a (Chlide). This reaction is light-independent. The L component serves as a unique electron donor to the NB-component of the complex, and binds Mg-ATP. The chain is Light-independent protochlorophyllide reductase iron-sulfur ATP-binding protein from Picea abies (Norway spruce).